Here is a 123-residue protein sequence, read N- to C-terminus: Glycophorin-B (123 aa).

A signal peptide spans 1 to 19 (MYGKIIFVLLLSEIVSISA). A helical membrane pass occupies residues 93 to 113 (VVIILIILCVMAGVIGTILLI).

It belongs to the glycophorin-A family. Component of the ankyrin-1 complex in the erythrocyte, composed of ANK1, RHCE, RHAG, SLC4A1, EPB42, GYPA, GYPB and AQP1. Interacts (via the N-terminal) with RHAG; this interaction bridges the (RHAG)2(RHCE) heterotrimer with the SLC4A1 Band 3 I dimer complexed with GYPA. The N-terminal extracellular domain is heavily glycosylated on serine and threonine residues.

The protein resides in the cell membrane. Functionally, component of the ankyrin-1 complex, a multiprotein complex involved in the stability and shape of the erythrocyte membrane. This chain is Glycophorin-B, found in Pan troglodytes (Chimpanzee).